A 476-amino-acid chain; its full sequence is tRNA(Ile)-lysidine synthase (476 aa).

30–35 (SGGPDS) serves as a coordination point for ATP.

This sequence belongs to the tRNA(Ile)-lysidine synthase family.

The protein localises to the cytoplasm. It catalyses the reaction cytidine(34) in tRNA(Ile2) + L-lysine + ATP = lysidine(34) in tRNA(Ile2) + AMP + diphosphate + H(+). Ligates lysine onto the cytidine present at position 34 of the AUA codon-specific tRNA(Ile) that contains the anticodon CAU, in an ATP-dependent manner. Cytidine is converted to lysidine, thus changing the amino acid specificity of the tRNA from methionine to isoleucine. This is tRNA(Ile)-lysidine synthase from Bacillus cereus (strain ATCC 14579 / DSM 31 / CCUG 7414 / JCM 2152 / NBRC 15305 / NCIMB 9373 / NCTC 2599 / NRRL B-3711).